A 79-amino-acid chain; its full sequence is Translational regulator CsrA (79 aa).

It belongs to the CsrA/RsmA family. Homodimer; the beta-strands of each monomer intercalate to form a hydrophobic core, while the alpha-helices form wings that extend away from the core.

The protein resides in the cytoplasm. Functionally, a translational regulator that binds mRNA to regulate translation initiation and/or mRNA stability. Usually binds in the 5'-UTR at or near the Shine-Dalgarno sequence preventing ribosome-binding, thus repressing translation. Its main target seems to be the major flagellin gene, while its function is anatagonized by FliW. The chain is Translational regulator CsrA from Shouchella clausii (strain KSM-K16) (Alkalihalobacillus clausii).